Here is a 103-residue protein sequence, read N- to C-terminus: Large ribosomal subunit protein bL21 (103 aa).

The protein belongs to the bacterial ribosomal protein bL21 family. As to quaternary structure, part of the 50S ribosomal subunit. Contacts protein L20.

This protein binds to 23S rRNA in the presence of protein L20. The polypeptide is Large ribosomal subunit protein bL21 (Shewanella amazonensis (strain ATCC BAA-1098 / SB2B)).